Consider the following 556-residue polypeptide: Arginine--tRNA ligase (556 aa).

The short motif at 133–143 (ANPTGPIHIGH) is the 'HIGH' region element.

It belongs to the class-I aminoacyl-tRNA synthetase family. Monomer.

The protein localises to the cytoplasm. It catalyses the reaction tRNA(Arg) + L-arginine + ATP = L-arginyl-tRNA(Arg) + AMP + diphosphate. The protein is Arginine--tRNA ligase of Dehalococcoides mccartyi (strain ATCC BAA-2100 / JCM 16839 / KCTC 5957 / BAV1).